Reading from the N-terminus, the 327-residue chain is Aspartate--ammonia ligase (327 aa).

Belongs to the class-II aminoacyl-tRNA synthetase family. AsnA subfamily.

It localises to the cytoplasm. The catalysed reaction is L-aspartate + NH4(+) + ATP = L-asparagine + AMP + diphosphate + H(+). It functions in the pathway amino-acid biosynthesis; L-asparagine biosynthesis; L-asparagine from L-aspartate (ammonia route): step 1/1. This chain is Aspartate--ammonia ligase, found in Fusobacterium nucleatum subsp. nucleatum (strain ATCC 25586 / DSM 15643 / BCRC 10681 / CIP 101130 / JCM 8532 / KCTC 2640 / LMG 13131 / VPI 4355).